A 471-amino-acid chain; its full sequence is Trigger factor (471 aa).

Positions 174-261 constitute a PPIase FKBP-type domain; it reads GDVAVVSFEG…VKDLKTRELP (88 aa). Over residues 436 to 446 the composition is skewed to polar residues; sequence ETLPKTKSLNG. The tract at residues 436-471 is disordered; it reads ETLPKTKSLNGKPSTQGKTSQSKSKKTKTKVEKTTK. A compositionally biased stretch (low complexity) spans 447-457; sequence KPSTQGKTSQS.

The protein belongs to the FKBP-type PPIase family. Tig subfamily.

It localises to the cytoplasm. The catalysed reaction is [protein]-peptidylproline (omega=180) = [protein]-peptidylproline (omega=0). Involved in protein export. Acts as a chaperone by maintaining the newly synthesized protein in an open conformation. Functions as a peptidyl-prolyl cis-trans isomerase. This Prochlorococcus marinus (strain MIT 9211) protein is Trigger factor.